Consider the following 227-residue polypeptide: UPF0758 protein Rxyl_1530 (227 aa).

The MPN domain occupies 106–227 (VISSPADVDG…YFSMKEHGML (122 aa)). Zn(2+) contacts are provided by His177, His179, and Asp190. Residues 177-190 (HNHPSGRVEPSRED) carry the JAMM motif motif.

This sequence belongs to the UPF0758 family.

The polypeptide is UPF0758 protein Rxyl_1530 (Rubrobacter xylanophilus (strain DSM 9941 / JCM 11954 / NBRC 16129 / PRD-1)).